Reading from the N-terminus, the 122-residue chain is Large ribosomal subunit protein uL14c (122 aa).

It belongs to the universal ribosomal protein uL14 family. As to quaternary structure, part of the 50S ribosomal subunit.

It localises to the plastid. It is found in the chloroplast. Its function is as follows. Binds to 23S rRNA. This is Large ribosomal subunit protein uL14c from Coffea arabica (Arabian coffee).